The following is a 153-amino-acid chain: 6,7-dimethyl-8-ribityllumazine synthase (153 aa).

Residues Phe22, Ala56–Glu58, and Thr80–Ile82 each bind 5-amino-6-(D-ribitylamino)uracil. A (2S)-2-hydroxy-3-oxobutyl phosphate-binding site is contributed by Ser85–Thr86. The Proton donor role is filled by His88. Phe113 is a 5-amino-6-(D-ribitylamino)uracil binding site. Residue Arg127 coordinates (2S)-2-hydroxy-3-oxobutyl phosphate.

The protein belongs to the DMRL synthase family. Forms an icosahedral capsid composed of 60 subunits, arranged as a dodecamer of pentamers.

It carries out the reaction (2S)-2-hydroxy-3-oxobutyl phosphate + 5-amino-6-(D-ribitylamino)uracil = 6,7-dimethyl-8-(1-D-ribityl)lumazine + phosphate + 2 H2O + H(+). It functions in the pathway cofactor biosynthesis; riboflavin biosynthesis; riboflavin from 2-hydroxy-3-oxobutyl phosphate and 5-amino-6-(D-ribitylamino)uracil: step 1/2. Functionally, catalyzes the formation of 6,7-dimethyl-8-ribityllumazine by condensation of 5-amino-6-(D-ribitylamino)uracil with 3,4-dihydroxy-2-butanone 4-phosphate. This is the penultimate step in the biosynthesis of riboflavin. The protein is 6,7-dimethyl-8-ribityllumazine synthase of Actinobacillus pleuropneumoniae serotype 7 (strain AP76).